Consider the following 45-residue polypeptide: Large ribosomal subunit protein bL34 (45 aa).

Composition is skewed to basic residues over residues methionine 1 to alanine 15 and methionine 22 to lysine 45. Residues methionine 1–lysine 45 form a disordered region.

Belongs to the bacterial ribosomal protein bL34 family.

In Sulfurihydrogenibium sp. (strain YO3AOP1), this protein is Large ribosomal subunit protein bL34.